A 133-amino-acid chain; its full sequence is Small ribosomal subunit protein eS8 (133 aa).

A disordered region spans residues 1–22; that stretch reads MGFYQGPDNRKITGGLKGKHRD.

The protein belongs to the eukaryotic ribosomal protein eS8 family. In terms of assembly, part of the 30S ribosomal subunit.

The chain is Small ribosomal subunit protein eS8 from Saccharolobus islandicus (strain Y.N.15.51 / Yellowstone #2) (Sulfolobus islandicus).